A 227-amino-acid polypeptide reads, in one-letter code: Phosphoribosylformylglycinamidine synthase subunit PurQ (227 aa).

Residues 3 to 225 form the Glutamine amidotransferase type-1 domain; the sequence is FAVIVFPGSN…LKQWRETYVV (223 aa). The Nucleophile role is filled by Cys-86. Residues His-194 and Glu-196 contribute to the active site.

Part of the FGAM synthase complex composed of 1 PurL, 1 PurQ and 2 PurS subunits.

The protein localises to the cytoplasm. The enzyme catalyses N(2)-formyl-N(1)-(5-phospho-beta-D-ribosyl)glycinamide + L-glutamine + ATP + H2O = 2-formamido-N(1)-(5-O-phospho-beta-D-ribosyl)acetamidine + L-glutamate + ADP + phosphate + H(+). It carries out the reaction L-glutamine + H2O = L-glutamate + NH4(+). It participates in purine metabolism; IMP biosynthesis via de novo pathway; 5-amino-1-(5-phospho-D-ribosyl)imidazole from N(2)-formyl-N(1)-(5-phospho-D-ribosyl)glycinamide: step 1/2. Its function is as follows. Part of the phosphoribosylformylglycinamidine synthase complex involved in the purines biosynthetic pathway. Catalyzes the ATP-dependent conversion of formylglycinamide ribonucleotide (FGAR) and glutamine to yield formylglycinamidine ribonucleotide (FGAM) and glutamate. The FGAM synthase complex is composed of three subunits. PurQ produces an ammonia molecule by converting glutamine to glutamate. PurL transfers the ammonia molecule to FGAR to form FGAM in an ATP-dependent manner. PurS interacts with PurQ and PurL and is thought to assist in the transfer of the ammonia molecule from PurQ to PurL. The sequence is that of Phosphoribosylformylglycinamidine synthase subunit PurQ from Bacillus cereus (strain B4264).